The following is a 275-amino-acid chain: NAD kinase (275 aa).

The Proton acceptor role is filled by Asp66. Residues 66–67, His71, 135–136, Lys146, Arg163, Asp165, and 176–181 each bind NAD(+); these read DG, NE, and TAYAMS.

Belongs to the NAD kinase family. A divalent metal cation serves as cofactor.

It is found in the cytoplasm. It catalyses the reaction NAD(+) + ATP = ADP + NADP(+) + H(+). Involved in the regulation of the intracellular balance of NAD and NADP, and is a key enzyme in the biosynthesis of NADP. Catalyzes specifically the phosphorylation on 2'-hydroxyl of the adenosine moiety of NAD to yield NADP. The polypeptide is NAD kinase (Methanosphaera stadtmanae (strain ATCC 43021 / DSM 3091 / JCM 11832 / MCB-3)).